Here is a 254-residue protein sequence, read N- to C-terminus: 4-hydroxy-tetrahydrodipicolinate reductase (254 aa).

7–12 serves as a coordination point for NAD(+); sequence GASGRI. Arg-35 lines the NADP(+) pocket. NAD(+) contacts are provided by residues 91 to 93 and 115 to 118; these read GTT and AHNM. The active-site Proton donor/acceptor is His-147. His-148 serves as a coordination point for (S)-2,3,4,5-tetrahydrodipicolinate. Lys-151 acts as the Proton donor in catalysis. Residue 157–158 coordinates (S)-2,3,4,5-tetrahydrodipicolinate; sequence GT.

It belongs to the DapB family.

It localises to the cytoplasm. It catalyses the reaction (S)-2,3,4,5-tetrahydrodipicolinate + NAD(+) + H2O = (2S,4S)-4-hydroxy-2,3,4,5-tetrahydrodipicolinate + NADH + H(+). It carries out the reaction (S)-2,3,4,5-tetrahydrodipicolinate + NADP(+) + H2O = (2S,4S)-4-hydroxy-2,3,4,5-tetrahydrodipicolinate + NADPH + H(+). It functions in the pathway amino-acid biosynthesis; L-lysine biosynthesis via DAP pathway; (S)-tetrahydrodipicolinate from L-aspartate: step 4/4. In terms of biological role, catalyzes the conversion of 4-hydroxy-tetrahydrodipicolinate (HTPA) to tetrahydrodipicolinate. The polypeptide is 4-hydroxy-tetrahydrodipicolinate reductase (Helicobacter pylori (strain HPAG1)).